A 373-amino-acid polypeptide reads, in one-letter code: Aromatic amino acid aminotransferase (373 aa).

Position 212 is an N6-(pyridoxal phosphate)lysine (Lys-212).

This sequence belongs to the class-II pyridoxal-phosphate-dependent aminotransferase family. Homodimer. It depends on pyridoxal 5'-phosphate as a cofactor.

It catalyses the reaction an aromatic L-alpha-amino acid + 2-oxoglutarate = an aromatic oxo-acid + L-glutamate. In terms of biological role, aminotransferase that catalyzes the conversion of aromatic amino acids and 2-oxoglutarate into corresponding aromatic oxo acids and L-glutamate. The sequence is that of Aromatic amino acid aminotransferase from Corynebacterium jeikeium (strain K411).